The following is a 434-amino-acid chain: Gamma-glutamyl phosphate reductase (434 aa).

The protein belongs to the gamma-glutamyl phosphate reductase family.

Its subcellular location is the cytoplasm. It carries out the reaction L-glutamate 5-semialdehyde + phosphate + NADP(+) = L-glutamyl 5-phosphate + NADPH + H(+). The protein operates within amino-acid biosynthesis; L-proline biosynthesis; L-glutamate 5-semialdehyde from L-glutamate: step 2/2. Functionally, catalyzes the NADPH-dependent reduction of L-glutamate 5-phosphate into L-glutamate 5-semialdehyde and phosphate. The product spontaneously undergoes cyclization to form 1-pyrroline-5-carboxylate. The chain is Gamma-glutamyl phosphate reductase from Trichormus variabilis (strain ATCC 29413 / PCC 7937) (Anabaena variabilis).